We begin with the raw amino-acid sequence, 328 residues long: dTDP-glucose 4,6-dehydratase (328 aa).

NAD(+) contacts are provided by residues 13 to 14 (FI), 37 to 40 (DALT), 63 to 64 (DI), 82 to 86 (LAAES), and T101. Residue S86 participates in substrate binding. Position 126 (T126) interacts with substrate. The Proton donor role is filled by D127. Active-site proton acceptor residues include E128 and Y150. 150-154 (YSASK) contacts NAD(+). N179 contacts substrate. Position 180 (N180) interacts with NAD(+). Substrate-binding positions include 189-190 (KL), 205-207 (PLY), R214, N249, and 272-276 (DRKGH).

It belongs to the NAD(P)-dependent epimerase/dehydratase family. dTDP-glucose dehydratase subfamily. As to quaternary structure, homodimer. NAD(+) serves as cofactor.

The catalysed reaction is dTDP-alpha-D-glucose = dTDP-4-dehydro-6-deoxy-alpha-D-glucose + H2O. It functions in the pathway antibiotic biosynthesis; streptomycin biosynthesis. Involved in the biosynthesis of the streptose moiety of streptomycin. Catalyzes the dehydration of dTDP-D-glucose to form dTDP-6-deoxy-D-xylo-4-hexulose via a three-step process involving oxidation, dehydration and reduction. This chain is dTDP-glucose 4,6-dehydratase, found in Streptomyces griseus.